Here is a 662-residue protein sequence, read N- to C-terminus: Glutathione hydrolase 7 (662 aa).

Over 1 to 106 the chain is Cytoplasmic; that stretch reads MAAENEASQE…AAECSCRQDG (106 aa). Phosphoserine occurs at positions 17, 72, 79, and 83. The tract at residues 26–90 is disordered; that stretch reads SFPRLPEDEP…DGSPLRETRK (65 aa). Low complexity predominate over residues 72 to 83; the sequence is SSSSEMGSQDGS. A helical; Signal-anchor for type II membrane protein transmembrane segment spans residues 107–127; the sequence is LTVIVTACLTFATGVTVALVM. The Extracellular segment spans residues 128 to 662; the sequence is QIYFGDPQIF…SLDATGASIL (535 aa). N-linked (GlcNAc...) asparagine glycans are attached at residues Asn-198, Asn-267, Asn-283, Asn-330, Asn-353, Asn-394, Asn-519, Asn-523, and Asn-586.

It belongs to the gamma-glutamyltransferase family. As to quaternary structure, heterodimer composed of the light and heavy chains. The active site is located in the light chain. In terms of processing, cleaved by autocatalysis into a large and a small subunit and the autocatalytic cleavage is essential to the functional activation of the enzyme.

It localises to the membrane. The catalysed reaction is an N-terminal (5-L-glutamyl)-[peptide] + an alpha-amino acid = 5-L-glutamyl amino acid + an N-terminal L-alpha-aminoacyl-[peptide]. It catalyses the reaction glutathione + H2O = L-cysteinylglycine + L-glutamate. It carries out the reaction an S-substituted glutathione + H2O = an S-substituted L-cysteinylglycine + L-glutamate. The protein operates within sulfur metabolism; glutathione metabolism. Functionally, hydrolyzes and transfers gamma-glutamyl moieties from glutathione and other gamma-glutamyl compounds to acceptors. The sequence is that of Glutathione hydrolase 7 from Rattus norvegicus (Rat).